The chain runs to 106 residues: SH3 domain-binding glutamic acid-rich-like protein 2-A (106 aa).

The short motif at 61 to 67 is the SH3-binding element; sequence QGNPLPP.

It belongs to the SH3BGR family.

The protein localises to the nucleus. This chain is SH3 domain-binding glutamic acid-rich-like protein 2-A (sh3bgrl2-a), found in Xenopus laevis (African clawed frog).